Reading from the N-terminus, the 891-residue chain is Dynein axonemal intermediate chain 3 (891 aa).

Positions 1 to 16 (MAPKQKKKSSRRKKSP) are enriched in basic residues. The segment at 1 to 27 (MAPKQKKKSSRRKKSPKPILAASEDME) is disordered. 4 WD repeats span residues 395 to 435 (ESPD…DRIE), 477 to 533 (GHKR…PLTP), 670 to 709 (IHDG…GPLL), and 713 to 753 (CAPK…HEPA). Residues 817–861 (HLEYVEQRKKIREQEKKEMEQEMAKKKVKIYQKSKEQMEAELKMD) are a coiled coil.

Interacts with ACTR2; this interaction reduces binding of the Arp2/3 complex to the VCA domain of nucleation promoting factors. Part of the multisubunit axonemal dynein complex formed at least of two heavy chains and a number of intermediate and light chains. Found in a associated with the catalytic heavy chain DNAH2, the intermediate chain DNAI4, and the light chain DYNLT1.

The protein localises to the cytoplasm. In terms of biological role, acts as a negative regulator of cell migration, invasion, and metastasis downstream of p53/TP53, through inhibition of Arp2/3 complex-mediated actin polymerization. Via its association with the multisubunit axonemal dynein complex, is potentially involved in the regulation of cilia function. May play a role in osteogenesis of dental tissue-derived mesenchymal stem cells. The sequence is that of Dynein axonemal intermediate chain 3 (DNAI3) from Macaca fascicularis (Crab-eating macaque).